Consider the following 347-residue polypeptide: Fructose-1,6-bisphosphatase class 1 (347 aa).

Glu-106, Asp-128, Ile-130, and Asp-131 together coordinate Mg(2+). Residues 131–134 (DGSS), Asn-223, Tyr-251, and Lys-281 each bind substrate. A Mg(2+)-binding site is contributed by Glu-287.

The protein belongs to the FBPase class 1 family. In terms of assembly, homotetramer. Requires Mg(2+) as cofactor.

It is found in the cytoplasm. It carries out the reaction beta-D-fructose 1,6-bisphosphate + H2O = beta-D-fructose 6-phosphate + phosphate. It functions in the pathway carbohydrate biosynthesis; Calvin cycle. This Synechocystis sp. (strain ATCC 27184 / PCC 6803 / Kazusa) protein is Fructose-1,6-bisphosphatase class 1.